The chain runs to 396 residues: Serine/threonine-protein kinase VRK1 (396 aa).

One can recognise a Protein kinase domain in the interval 37–317 (WKLGSPIGQG…LLDYVEKPLY (281 aa)). ATP is bound by residues 43–51 (IGQGGFGCI) and Lys-71. Lys-71 participates in a covalent cross-link: Glycyl lysine isopeptide (Lys-Gly) (interchain with G-Cter in SUMO2). Asp-177 acts as the Proton acceptor in catalysis. A disordered region spans residues 352–396 (KPVAKKRKKEAEESVESSVEDMECSDKQTEEATQTRSKTRKRVQK). Residues 364 to 374 (ESVESSVEDME) show a composition bias toward acidic residues. At Ser-376 the chain carries Phosphoserine. A required for interaction with the nucleosome region spans residues 387-393 (RSKTRKR).

This sequence belongs to the protein kinase superfamily. CK1 Ser/Thr protein kinase family. VRK subfamily. In terms of assembly, interacts with HDAC1, KAT2B, SETDB1, KDM3A and KDM4A. Associates with the nucleosome through interactions with nucleosome DNA, histone H2A and histone H2B; the interaction with H2A and H2B is mediated by the nucleosome acidic patch, a cluster of negatively charged residues of H2A and H2B forming a cleft within the nucleosome core. In terms of processing, autophosphorylated at various serine and threonine residues. Autophosphorylation does not impair its ability to phosphorylate p53/TP53. Phosphorylation by PLK3 leads to induction of Golgi fragmentation during mitosis.

The protein localises to the nucleus. The protein resides in the cytoplasm. It localises to the cajal body. It carries out the reaction L-seryl-[protein] + ATP = O-phospho-L-seryl-[protein] + ADP + H(+). The catalysed reaction is L-threonyl-[protein] + ATP = O-phospho-L-threonyl-[protein] + ADP + H(+). Its activity is regulated as follows. Active in presence of Mn(2+), Mg(2+) and Zn(2+), but is not functional with Ca(2+) or Cu(2+). Has a higher affinity for Mn(2+) than for Mg(2+). RAN inhibits its autophosphorylation and its ability to phosphorylate histone H3. Functionally, serine/threonine kinase involved in the regulation of key cellular processes including the cell cycle, nuclear condensation, transcription regulation, and DNA damage response. Controls chromatin organization and remodeling by mediating phosphorylation of histone H3 on 'Thr-4' and histone H2AX (H2aXT4ph). It also phosphorylates KAT5 in response to DNA damage, promoting KAT5 association with chromatin and histone acetyltransferase activity. Is involved in the regulation of cell cycle progression of neural progenitors, and is required for proper cortical neuronal migration. Is involved in neurite elongation and branching in motor neurons, and has an essential role in Cajal bodies assembly, acting through COIL phosphorylation and the control of coilin degradation. Involved in Golgi disassembly during the cell cycle: following phosphorylation by PLK3 during mitosis, it is required to induce Golgi fragmentation. Phosphorylates BANF1: disrupts its ability to bind DNA, reduces its binding to LEM domain-containing proteins and causes its relocalization from the nucleus to the cytoplasm. Phosphorylates TP53BP1 and p53/TP53 on 'Thr-18', preventing the interaction between p53/TP53 and MDM2. Phosphorylates ATF2 which activates its transcriptional activity. Phosphorylates JUN. The protein is Serine/threonine-protein kinase VRK1 (VRK1) of Bos taurus (Bovine).